A 443-amino-acid chain; its full sequence is Xaa-Pro dipeptidase (443 aa).

Mn(2+) contacts are provided by Asp246, Asp257, His339, Glu384, and Glu423.

It belongs to the peptidase M24B family. Bacterial-type prolidase subfamily. Mn(2+) is required as a cofactor.

The enzyme catalyses Xaa-L-Pro dipeptide + H2O = an L-alpha-amino acid + L-proline. Splits dipeptides with a prolyl residue in the C-terminal position. The polypeptide is Xaa-Pro dipeptidase (Shigella flexneri serotype 5b (strain 8401)).